The sequence spans 337 residues: MKAVAINGYGTVGKRVADAIAQQDDMKVIGVSKTRPDFEARMALKKGYDLYVAIPERVKLFEKAGIEVAGTVDDMLDEADIVIDCTPEGIGAKNLKMYKEKGIKAIFQGGEKHEDIGLSFNSLSNYEESYGKDYTRVVSCNTTGLCRTLKPLHDSFGIKKVRAVIVRRGADPAQVSKGPINAIIPNPPKLPSHHGPDVKTVLDINIDTMAVIVPTTLMHQHNVMVEVEETPTVDDIIDVFEDTPRVILISAEDGLTSTAEIMEYAKELGRSRNDLFEIPVWRESITVVDNEIYYMQAVHQESDIVPENVDAVRAILEMEEDKYKSINKTNKAMNILQ.

NADP(+)-binding positions include 11–12, 34–35, and glycine 110; these read TV and TR. Residue 139-141 participates in D-glyceraldehyde 3-phosphate binding; the sequence is SCN. The active-site Nucleophile is the cysteine 140. NADP(+) is bound at residue aspartate 171. 194–195 serves as a coordination point for D-glyceraldehyde 3-phosphate; sequence HG. Glutamine 300 contributes to the NADP(+) binding site.

The protein belongs to the glyceraldehyde-3-phosphate dehydrogenase family. As to quaternary structure, homotetramer.

It is found in the cytoplasm. The enzyme catalyses D-glyceraldehyde 3-phosphate + phosphate + NADP(+) = (2R)-3-phospho-glyceroyl phosphate + NADPH + H(+). It catalyses the reaction D-glyceraldehyde 3-phosphate + phosphate + NAD(+) = (2R)-3-phospho-glyceroyl phosphate + NADH + H(+). It functions in the pathway carbohydrate degradation; glycolysis; pyruvate from D-glyceraldehyde 3-phosphate: step 1/5. Exhibits a dual-cofactor specificity, with a marked preference for NADP(+) over NAD(+). In Methanothermus fervidus, this protein is Glyceraldehyde-3-phosphate dehydrogenase (gap).